The following is a 260-amino-acid chain: Small ribosomal subunit protein uS2 (260 aa).

The segment at 240-260 (VLKPKLPYQPNRRPYQETVKK) is disordered.

Belongs to the universal ribosomal protein uS2 family.

The sequence is that of Small ribosomal subunit protein uS2 from Phytoplasma australiense.